The following is a 233-amino-acid chain: Large ribosomal subunit protein uL1 (233 aa).

The protein belongs to the universal ribosomal protein uL1 family. Part of the 50S ribosomal subunit.

Functionally, binds directly to 23S rRNA. The L1 stalk is quite mobile in the ribosome, and is involved in E site tRNA release. In terms of biological role, protein L1 is also a translational repressor protein, it controls the translation of the L11 operon by binding to its mRNA. This chain is Large ribosomal subunit protein uL1, found in Polynucleobacter necessarius subsp. necessarius (strain STIR1).